The following is a 342-amino-acid chain: Growth hormone-regulated TBC protein 1 (342 aa).

The Rab-GAP TBC domain occupies 72–263 (GIPNEHRSHV…RIWDCLFFEG (192 aa)).

Functionally, may act as a GTPase-activating protein for Rab family protein(s). This Xenopus tropicalis (Western clawed frog) protein is Growth hormone-regulated TBC protein 1 (grtp1).